Reading from the N-terminus, the 137-residue chain is MQNLLKNLATSLGREPFVADKQGVYRLTIDKHLVMLAPHGSELVLRTPIDAPMLREGNNVNVTLLRSLMQQALAWAKRYPQTLVLDDCGQLVLEARLRLQELDTHGLQEVINKQLALLEYLIPQLTPFSVASRVGWN.

In terms of assembly, interacts with SycN to form a complex which specifically binds to YopN.

It localises to the cytoplasm. Its subcellular location is the cell inner membrane. In terms of biological role, functions as a specific chaperone for YopN. It could facilitate the secretion and the subsequent translocation of YopN. In Yersinia enterocolitica serotype O:8 / biotype 1B (strain NCTC 13174 / 8081), this protein is Chaperone protein YscB (yscB).